An 867-amino-acid polypeptide reads, in one-letter code: Alanine--tRNA ligase (867 aa).

Zn(2+)-binding residues include H556, H560, C658, and H662.

It belongs to the class-II aminoacyl-tRNA synthetase family. It depends on Zn(2+) as a cofactor.

Its subcellular location is the cytoplasm. It catalyses the reaction tRNA(Ala) + L-alanine + ATP = L-alanyl-tRNA(Ala) + AMP + diphosphate. Functionally, catalyzes the attachment of alanine to tRNA(Ala) in a two-step reaction: alanine is first activated by ATP to form Ala-AMP and then transferred to the acceptor end of tRNA(Ala). Also edits incorrectly charged Ser-tRNA(Ala) and Gly-tRNA(Ala) via its editing domain. In Fusobacterium nucleatum subsp. nucleatum (strain ATCC 25586 / DSM 15643 / BCRC 10681 / CIP 101130 / JCM 8532 / KCTC 2640 / LMG 13131 / VPI 4355), this protein is Alanine--tRNA ligase.